We begin with the raw amino-acid sequence, 247 residues long: Uridylate kinase (247 aa).

17 to 20 (KFSG) lines the ATP pocket. Residue Gly59 coordinates UMP. The ATP site is built by Gly60 and Arg64. UMP-binding positions include Asp79 and 140–147 (TGNPFFTT). Residues Thr167, Tyr173, and Asp176 each coordinate ATP.

Belongs to the UMP kinase family. As to quaternary structure, homohexamer.

It is found in the cytoplasm. The catalysed reaction is UMP + ATP = UDP + ADP. It functions in the pathway pyrimidine metabolism; CTP biosynthesis via de novo pathway; UDP from UMP (UMPK route): step 1/1. Inhibited by UTP. Functionally, catalyzes the reversible phosphorylation of UMP to UDP. In Legionella pneumophila subsp. pneumophila (strain Philadelphia 1 / ATCC 33152 / DSM 7513), this protein is Uridylate kinase.